Here is a 189-residue protein sequence, read N- to C-terminus: Elongation factor P (189 aa).

This sequence belongs to the elongation factor P family.

The protein resides in the cytoplasm. It participates in protein biosynthesis; polypeptide chain elongation. Involved in peptide bond synthesis. Stimulates efficient translation and peptide-bond synthesis on native or reconstituted 70S ribosomes in vitro. Probably functions indirectly by altering the affinity of the ribosome for aminoacyl-tRNA, thus increasing their reactivity as acceptors for peptidyl transferase. The polypeptide is Elongation factor P (Orientia tsutsugamushi (strain Ikeda) (Rickettsia tsutsugamushi)).